We begin with the raw amino-acid sequence, 77 residues long: Putative neurotoxin 1 (77 aa).

An N-terminal signal peptide occupies residues 1–25 (MKAFIVILSIAIVLLLIVSIKETSA). Positions 26-46 (KDCKQECVKRYTKGDLTNFLK) are excised as a propeptide.

Belongs to the scolopendra neurotoxin 3 family. In terms of processing, contains 2 disulfide bonds. In terms of tissue distribution, expressed by the venom gland.

It is found in the secreted. This chain is Putative neurotoxin 1, found in Scolopendra subspinipes (Vietnamese centipede).